The following is a 406-amino-acid chain: E3 ubiquitin-protein ligase RING1 (406 aa).

At Thr-24 the chain carries Phosphothreonine. The interval 30–234 is necessary for transcriptional repression; it reads MDGTEIAVSP…GGAGSEDSGD (205 aa). A Phosphoserine modification is found at Ser-38. An RING-type zinc finger spans residues 48–88; the sequence is CPICLDMLKNTMTTKECLHRFCSDCIVTALRSGNKECPTCR. A phosphoserine mark is found at Ser-140, Ser-187, and Ser-190. Disordered regions lie at residues 151 to 263 and 309 to 354; these read HRAQ…GEIE and QQQE…PSLE. Acidic residues predominate over residues 175–187; the sequence is EPGEGEGDGEDVS. Residues 201-204 carry the Nuclear localization signal motif; sequence KRPR. Residues 214-228 are compositionally biased toward gly residues; it reads GTGGGAAGGACGGAG. Thr-215 carries the post-translational modification Phosphothreonine. Phosphoserine occurs at positions 229 and 232. The segment at 230-406 is necessary for interaction with CBX2; sequence EDSGDRGGTL…LCYAPTKDPK (177 aa). Over residues 235–244 the composition is skewed to gly residues; that stretch reads RGGTLGGGTL. Residues 246 to 258 are compositionally biased toward pro residues; sequence PPSPPGAPSPPEP. Ser-248 and Ser-254 each carry phosphoserine. A compositionally biased stretch (gly residues) spans 317–343; the sequence is GGPGGGASDTGGPDGGGGERGVAGGGE.

In terms of assembly, component of chromatin-associated Polycomb (PcG) complexes. Part of the E2F6.com-1 complex in G0 phase composed of E2F6, MGA, MAX, TFDP1, CBX3, BAT8, EUHMTASE1, RING1, RNF2/RING2 MBLR, L3MBTL2 and YAF2. Interacts with CBX2 and PCGF6. Component of a PRC1-like complex. Component of repressive BCOR complex containing Polycomb group subcomplex at least composed of RYBP, PCGF1, BCOR and RNF2/RING2. Interacts with PHC2, PCGF2, RNF2; CBX6, CBX7 and CBX8. Interacts with BMI1. Interacts with MN1. Interacts with USP26.

It is found in the nucleus speckle. The enzyme catalyses S-ubiquitinyl-[E2 ubiquitin-conjugating enzyme]-L-cysteine + [acceptor protein]-L-lysine = [E2 ubiquitin-conjugating enzyme]-L-cysteine + N(6)-ubiquitinyl-[acceptor protein]-L-lysine.. It participates in protein modification; protein ubiquitination. In terms of biological role, constitutes one of the E3 ubiquitin-protein ligases that mediate monoubiquitination of 'Lys-119' of histone H2A, thereby playing a central role in histone code and gene regulation. H2A 'Lys-119' ubiquitination gives a specific tag for epigenetic transcriptional repression and participates in X chromosome inactivation of female mammals. Essential component of a Polycomb group (PcG) multiprotein PRC1-like complex, a complex class required to maintain the transcriptionally repressive state of many genes, including Hox genes, throughout development. PcG PRC1 complex acts via chromatin remodeling and modification of histones, rendering chromatin heritably changed in its expressibility. Compared to RNF2/RING2, it does not have the main E3 ubiquitin ligase activity on histone H2A, and it may rather act as a modulator of RNF2/RING2 activity. The sequence is that of E3 ubiquitin-protein ligase RING1 from Mus musculus (Mouse).